The chain runs to 145 residues: Ribosome maturation factor RimP (145 aa).

The protein belongs to the RimP family.

It localises to the cytoplasm. Functionally, required for maturation of 30S ribosomal subunits. This is Ribosome maturation factor RimP from Borreliella burgdorferi (strain ZS7) (Borrelia burgdorferi).